A 613-amino-acid polypeptide reads, in one-letter code: Cysteine--tRNA ligase (613 aa).

Residues Met1–Asn130 are disordered. 6 repeat units span residues Pro36–Val49, Pro50–Val63, Pro64–Val77, Pro78–Val91, Pro92–Val105, and Pro106–Val119. Residues Pro36–Val119 are 6 X 14 AA tandem repeats of P-[TA]-R-G-D-K-K-R-A-[RP]-R-[PL]-G-V. Positions Val148–Arg613 are cysteinyl-tRNA synthetase. Zn(2+) is bound at residue Cys176. Positions Ala178–His188 match the 'HIGH' region motif. Positions 355, 380, and 384 each coordinate Zn(2+). Positions Lys411–Ser415 match the 'KMSKS' region motif. Lys414 provides a ligand contact to ATP.

Belongs to the class-I aminoacyl-tRNA synthetase family. In terms of assembly, monomer. The cofactor is Zn(2+).

It is found in the cytoplasm. It carries out the reaction tRNA(Cys) + L-cysteine + ATP = L-cysteinyl-tRNA(Cys) + AMP + diphosphate. The chain is Cysteine--tRNA ligase from Streptomyces coelicolor (strain ATCC BAA-471 / A3(2) / M145).